Here is a 178-residue protein sequence, read N- to C-terminus: Fluoride-specific ion channel FluC 2 (178 aa).

4 consecutive transmembrane segments (helical) span residues 25–45 (PDIHLDIVLVVFCGGAIGTAI), 63–83 (FVANMLACFCYAGLTAYLAGA), 97–117 (GLGMGVCGGLSTMSTLALEGF), and 129–149 (IAYLLVTFALGLVCASAGVWA). 2 residues coordinate Na(+): Gly104 and Ser107.

The protein belongs to the fluoride channel Fluc/FEX (TC 1.A.43) family.

It localises to the cell membrane. It carries out the reaction fluoride(in) = fluoride(out). Na(+) is not transported, but it plays an essential structural role and its presence is essential for fluoride channel function. Functionally, fluoride-specific ion channel. Important for reducing fluoride concentration in the cell, thus reducing its toxicity. This chain is Fluoride-specific ion channel FluC 2, found in Bifidobacterium longum (strain NCC 2705).